The primary structure comprises 382 residues: Anhydro-N-acetylmuramic acid kinase (382 aa).

ATP is bound at residue 9–16 (GTSLDGID).

Belongs to the anhydro-N-acetylmuramic acid kinase family.

The enzyme catalyses 1,6-anhydro-N-acetyl-beta-muramate + ATP + H2O = N-acetyl-D-muramate 6-phosphate + ADP + H(+). The protein operates within amino-sugar metabolism; 1,6-anhydro-N-acetylmuramate degradation. It functions in the pathway cell wall biogenesis; peptidoglycan recycling. Catalyzes the specific phosphorylation of 1,6-anhydro-N-acetylmuramic acid (anhMurNAc) with the simultaneous cleavage of the 1,6-anhydro ring, generating MurNAc-6-P. Is required for the utilization of anhMurNAc either imported from the medium or derived from its own cell wall murein, and thus plays a role in cell wall recycling. The sequence is that of Anhydro-N-acetylmuramic acid kinase from Bacillus cereus (strain AH187).